We begin with the raw amino-acid sequence, 248 residues long: Molybdate/tungstate transport system permease protein WtpB (248 aa).

Over Met-1 to Tyr-9 the chain is Cytoplasmic. The helical transmembrane segment at Leu-10–Phe-30 threads the bilayer. Topologically, residues Thr-31 to Ser-56 are extracellular. In terms of domain architecture, ABC transmembrane type-1 spans Leu-53–Leu-239. A helical membrane pass occupies residues Leu-57–Val-77. At Leu-78–Ala-91 the chain is on the cytoplasmic side. The chain crosses the membrane as a helical span at residues Ile-92–Phe-112. At Ser-113–Ala-115 the chain is on the extracellular side. Residues Ile-116–Ile-136 traverse the membrane as a helical segment. Over Asn-137–Thr-164 the chain is Cytoplasmic. The helical transmembrane segment at Phe-165–Trp-185 threads the bilayer. Topologically, residues Ala-186–Pro-223 are extracellular. Residues Ile-224 to Gly-244 traverse the membrane as a helical segment. Topologically, residues Lys-245–Ser-248 are cytoplasmic.

This sequence belongs to the binding-protein-dependent transport system permease family. In terms of assembly, the complex is composed of two ATP-binding proteins (WtpC), two transmembrane proteins (WtpB) and a solute-binding protein (WtpA).

It localises to the cell membrane. Functionally, part of the ABC transporter complex WtpABC involved in molybdate/tungstate import. Probably responsible for the translocation of the substrate across the membrane. In Pyrococcus abyssi (strain GE5 / Orsay), this protein is Molybdate/tungstate transport system permease protein WtpB (wtpB).